Reading from the N-terminus, the 164-residue chain is Transcription elongation factor GreA (164 aa).

It belongs to the GreA/GreB family.

Necessary for efficient RNA polymerase transcription elongation past template-encoded arresting sites. The arresting sites in DNA have the property of trapping a certain fraction of elongating RNA polymerases that pass through, resulting in locked ternary complexes. Cleavage of the nascent transcript by cleavage factors such as GreA or GreB allows the resumption of elongation from the new 3'terminus. GreA releases sequences of 2 to 3 nucleotides. This Helicobacter pylori (strain J99 / ATCC 700824) (Campylobacter pylori J99) protein is Transcription elongation factor GreA.